Here is a 59-residue protein sequence, read N- to C-terminus: Single-pass membrane and coiled-coil domain-containing protein 4 homolog (59 aa).

The span at Met-1–Leu-11 shows a compositional bias: basic residues. The disordered stretch occupies residues Met-1–Arg-20. A coiled-coil region spans residues Arg-10–Val-30. A helical transmembrane segment spans residues Val-30–Tyr-50.

It belongs to the SMCO4 family.

Its subcellular location is the membrane. In Argas monolakensis (Mono lake bird tick), this protein is Single-pass membrane and coiled-coil domain-containing protein 4 homolog.